We begin with the raw amino-acid sequence, 390 residues long: 1-deoxy-D-xylulose 5-phosphate reductoisomerase (390 aa).

7 residues coordinate NADPH: Thr10, Gly11, Ser12, Ile13, Gly36, Asn38, and Asn124. A 1-deoxy-D-xylulose 5-phosphate-binding site is contributed by Lys125. Glu126 lines the NADPH pocket. A Mn(2+)-binding site is contributed by Asp150. Residues Ser151, Glu152, Ser176, and His199 each coordinate 1-deoxy-D-xylulose 5-phosphate. A Mn(2+)-binding site is contributed by Glu152. Position 205 (Gly205) interacts with NADPH. 1-deoxy-D-xylulose 5-phosphate-binding residues include Ser212, Asn217, Lys218, and Glu221. Glu221 contributes to the Mn(2+) binding site.

This sequence belongs to the DXR family. The cofactor is Mg(2+). Mn(2+) serves as cofactor.

It catalyses the reaction 2-C-methyl-D-erythritol 4-phosphate + NADP(+) = 1-deoxy-D-xylulose 5-phosphate + NADPH + H(+). It participates in isoprenoid biosynthesis; isopentenyl diphosphate biosynthesis via DXP pathway; isopentenyl diphosphate from 1-deoxy-D-xylulose 5-phosphate: step 1/6. Its function is as follows. Catalyzes the NADPH-dependent rearrangement and reduction of 1-deoxy-D-xylulose-5-phosphate (DXP) to 2-C-methyl-D-erythritol 4-phosphate (MEP). This chain is 1-deoxy-D-xylulose 5-phosphate reductoisomerase, found in Microcystis aeruginosa (strain NIES-843 / IAM M-2473).